Here is a 605-residue protein sequence, read N- to C-terminus: Elongation factor 4 (605 aa).

The 184-residue stretch at 9 to 192 (SRTRNFCIIA…AIIARIPSPK (184 aa)) folds into the tr-type G domain. GTP contacts are provided by residues 21–26 (DHGKST) and 139–142 (NKID).

This sequence belongs to the TRAFAC class translation factor GTPase superfamily. Classic translation factor GTPase family. LepA subfamily.

The protein resides in the cell inner membrane. The enzyme catalyses GTP + H2O = GDP + phosphate + H(+). Required for accurate and efficient protein synthesis under certain stress conditions. May act as a fidelity factor of the translation reaction, by catalyzing a one-codon backward translocation of tRNAs on improperly translocated ribosomes. Back-translocation proceeds from a post-translocation (POST) complex to a pre-translocation (PRE) complex, thus giving elongation factor G a second chance to translocate the tRNAs correctly. Binds to ribosomes in a GTP-dependent manner. The polypeptide is Elongation factor 4 (Chlorobium limicola (strain DSM 245 / NBRC 103803 / 6330)).